Here is a 394-residue protein sequence, read N- to C-terminus: Elongation factor Tu 1 (394 aa).

One can recognise a tr-type G domain in the interval 10–204 (KPHVNVGTIG…ALDSYIPEPE (195 aa)). The G1 stretch occupies residues 19-26 (GHVDHGKT). Residue 19 to 26 (GHVDHGKT) participates in GTP binding. T26 is a Mg(2+) binding site. Positions 60–64 (GITIS) are G2. The tract at residues 81–84 (DCPG) is G3. GTP is bound by residues 81–85 (DCPGH) and 136–139 (NKCD). Positions 136–139 (NKCD) are G4. Positions 174–176 (SAL) are G5.

It belongs to the TRAFAC class translation factor GTPase superfamily. Classic translation factor GTPase family. EF-Tu/EF-1A subfamily. Monomer.

Its subcellular location is the cytoplasm. The enzyme catalyses GTP + H2O = GDP + phosphate + H(+). In terms of biological role, GTP hydrolase that promotes the GTP-dependent binding of aminoacyl-tRNA to the A-site of ribosomes during protein biosynthesis. In Vibrio vulnificus (strain YJ016), this protein is Elongation factor Tu 1.